Here is a 921-residue protein sequence, read N- to C-terminus: Isoleucine--tRNA ligase (921 aa).

The 'HIGH' region signature appears at 57–67; it reads PYANGDIHMGH. An L-isoleucyl-5'-AMP-binding site is contributed by Glu-552. Positions 593–597 match the 'KMSKS' region motif; it reads KMSKS. Lys-596 is an ATP binding site. Residues Cys-888, Cys-891, Cys-908, and Cys-911 each coordinate Zn(2+).

The protein belongs to the class-I aminoacyl-tRNA synthetase family. IleS type 1 subfamily. As to quaternary structure, monomer. It depends on Zn(2+) as a cofactor.

The protein localises to the cytoplasm. It carries out the reaction tRNA(Ile) + L-isoleucine + ATP = L-isoleucyl-tRNA(Ile) + AMP + diphosphate. Functionally, catalyzes the attachment of isoleucine to tRNA(Ile). As IleRS can inadvertently accommodate and process structurally similar amino acids such as valine, to avoid such errors it has two additional distinct tRNA(Ile)-dependent editing activities. One activity is designated as 'pretransfer' editing and involves the hydrolysis of activated Val-AMP. The other activity is designated 'posttransfer' editing and involves deacylation of mischarged Val-tRNA(Ile). The polypeptide is Isoleucine--tRNA ligase (Bacillus cereus (strain AH187)).